The chain runs to 118 residues: NADH-quinone oxidoreductase subunit A (118 aa).

The next 3 helical transmembrane spans lie at 6–26 (LIIGIFLIASFIFGMVVLLTA), 61–81 (FMYGLVFLLFDVETVFLLPWA), and 87–107 (LGLFALFEMVIFIGILIIGLW).

The protein belongs to the complex I subunit 3 family. As to quaternary structure, NDH-1 is composed of 14 different subunits. Subunits NuoA, H, J, K, L, M, N constitute the membrane sector of the complex.

Its subcellular location is the cell membrane. The enzyme catalyses a quinone + NADH + 5 H(+)(in) = a quinol + NAD(+) + 4 H(+)(out). In terms of biological role, NDH-1 shuttles electrons from NADH, via FMN and iron-sulfur (Fe-S) centers, to quinones in the respiratory chain. The immediate electron acceptor for the enzyme in this species is believed to be a menaquinone. Couples the redox reaction to proton translocation (for every two electrons transferred, four hydrogen ions are translocated across the cytoplasmic membrane), and thus conserves the redox energy in a proton gradient. This chain is NADH-quinone oxidoreductase subunit A, found in Clostridium beijerinckii (strain ATCC 51743 / NCIMB 8052) (Clostridium acetobutylicum).